We begin with the raw amino-acid sequence, 912 residues long: Coatomer subunit beta (912 aa).

HEAT repeat units lie at residues 59–96, 100–135, 136–172, 244–281, 300–337, 339–375, 397–434, 441–479, 550–575, and 576–612; these read PIPQ…THLG, SEMI…REAE, VLEP…HFDY, SERS…APTA, NVKM…PNID, CKKV…KEFD, EVLG…TYPS, KKLI…AMTS, LKAQ…TSKS, and AYER…YLKY.

As to quaternary structure, oligomeric complex that consists of at least the alpha, beta, beta', gamma, delta, epsilon and zeta subunits.

Its subcellular location is the cytoplasm. The protein localises to the golgi apparatus membrane. It is found in the cytoplasmic vesicle. The protein resides in the COPI-coated vesicle membrane. In terms of biological role, the coatomer is a cytosolic protein complex that binds to dilysine motifs and reversibly associates with Golgi non-clathrin-coated vesicles, which further mediate biosynthetic protein transport from the ER, via the Golgi up to the trans Golgi network. Coatomer complex is required for budding from Golgi membranes, and is essential for the retrograde Golgi-to-ER transport of dilysine-tagged proteins. This is Coatomer subunit beta (copb) from Dictyostelium discoideum (Social amoeba).